Here is a 139-residue protein sequence, read N- to C-terminus: Trafficking protein particle complex subunit 2-like protein (139 aa).

This sequence belongs to the TRAPP small subunits family. Sedlin subfamily.

The protein localises to the cytoplasm. Its subcellular location is the perinuclear region. It is found in the endoplasmic reticulum. It localises to the golgi apparatus. Its function is as follows. May play a role in vesicular transport from endoplasmic reticulum to Golgi. The polypeptide is Trafficking protein particle complex subunit 2-like protein (trappc2l) (Xenopus tropicalis (Western clawed frog)).